Consider the following 328-residue polypeptide: Phosphate acyltransferase (328 aa).

It belongs to the PlsX family. In terms of assembly, homodimer. Probably interacts with PlsY.

The protein localises to the cytoplasm. It catalyses the reaction a fatty acyl-[ACP] + phosphate = an acyl phosphate + holo-[ACP]. It participates in lipid metabolism; phospholipid metabolism. Catalyzes the reversible formation of acyl-phosphate (acyl-PO(4)) from acyl-[acyl-carrier-protein] (acyl-ACP). This enzyme utilizes acyl-ACP as fatty acyl donor, but not acyl-CoA. This is Phosphate acyltransferase from Staphylococcus aureus (strain bovine RF122 / ET3-1).